The primary structure comprises 169 residues: S-ribosylhomocysteine lyase (169 aa).

Residues histidine 54, histidine 58, and cysteine 128 each contribute to the Fe cation site.

This sequence belongs to the LuxS family. Homodimer. Fe cation serves as cofactor.

The catalysed reaction is S-(5-deoxy-D-ribos-5-yl)-L-homocysteine = (S)-4,5-dihydroxypentane-2,3-dione + L-homocysteine. In terms of biological role, involved in the synthesis of autoinducer 2 (AI-2) which is secreted by bacteria and is used to communicate both the cell density and the metabolic potential of the environment. The regulation of gene expression in response to changes in cell density is called quorum sensing. Catalyzes the transformation of S-ribosylhomocysteine (RHC) to homocysteine (HC) and 4,5-dihydroxy-2,3-pentadione (DPD). In Shewanella woodyi (strain ATCC 51908 / MS32), this protein is S-ribosylhomocysteine lyase.